The sequence spans 394 residues: NAD(P)H-quinone oxidoreductase subunit H (394 aa).

The protein belongs to the complex I 49 kDa subunit family. In terms of assembly, NDH-1 can be composed of about 15 different subunits; different subcomplexes with different compositions have been identified which probably have different functions.

It localises to the cellular thylakoid membrane. It catalyses the reaction a plastoquinone + NADH + (n+1) H(+)(in) = a plastoquinol + NAD(+) + n H(+)(out). The catalysed reaction is a plastoquinone + NADPH + (n+1) H(+)(in) = a plastoquinol + NADP(+) + n H(+)(out). In terms of biological role, NDH-1 shuttles electrons from an unknown electron donor, via FMN and iron-sulfur (Fe-S) centers, to quinones in the respiratory and/or the photosynthetic chain. The immediate electron acceptor for the enzyme in this species is believed to be plastoquinone. Couples the redox reaction to proton translocation, and thus conserves the redox energy in a proton gradient. Cyanobacterial NDH-1 also plays a role in inorganic carbon-concentration. This chain is NAD(P)H-quinone oxidoreductase subunit H, found in Acaryochloris marina (strain MBIC 11017).